A 680-amino-acid chain; its full sequence is Probable inactive DNA (cytosine-5)-methyltransferase DRM3 (680 aa).

The segment at Met-1–Ala-24 is disordered. The UBA 1 domain occupies Ser-45–Gln-86. Positions Lys-91–His-113 are disordered. A UBA 2 domain is found at Ser-194 to Ile-235. The SAM-dependent MTase DRM-type domain maps to Ile-336–Leu-663.

It belongs to the class I-like SAM-binding methyltransferase superfamily. DRM-methyltransferase family.

The protein resides in the nucleus. Involved in de novo DNA methylation. Involved in RNA-directed DNA methylation (RdDM). This is Probable inactive DNA (cytosine-5)-methyltransferase DRM3 from Oryza sativa subsp. japonica (Rice).